A 240-amino-acid polypeptide reads, in one-letter code: Poxin (240 aa).

His46 serves as the catalytic Proton donor. Tyr181 (shared with catalytic histidine of dimeric partner) is an active-site residue. Lys185 functions as the Proton acceptor; shared with catalytic histidine of dimeric partner in the catalytic mechanism.

Belongs to the poxin family. As to quaternary structure, homodimer.

The enzyme catalyses 2',3'-cGAMP + H2O = Gp(2'-5')Ap(3') + H(+). In terms of biological role, nuclease that cleaves host 2',3'-cGAMP. This is Poxin (P26) from Lepidoptera (butterflies and moths).